A 488-amino-acid polypeptide reads, in one-letter code: pH-response regulator protein palC (488 aa).

The region spanning 2–430 is the BRO1 domain; the sequence is PPYLYRLPTT…TVAFQPVPPV (429 aa). A disordered region spans residues 449–488; it reads PPPSKFSPSRIGHLNEEQGNDSPELGETEDTSYAGKGNYF.

This sequence belongs to the palC family.

Required for the proteolytic cleavage of the transcription factor RIM101 in response to alkaline ambient pH. In Cryptococcus neoformans var. neoformans serotype D (strain B-3501A) (Filobasidiella neoformans), this protein is pH-response regulator protein palC.